Here is a 228-residue protein sequence, read N- to C-terminus: Lipoprotein-releasing system ATP-binding protein LolD (228 aa).

Residues L7–M228 enclose the ABC transporter domain. ATP is bound at residue G43–S50.

It belongs to the ABC transporter superfamily. Lipoprotein translocase (TC 3.A.1.125) family. In terms of assembly, the complex is composed of two ATP-binding proteins (LolD) and two transmembrane proteins (LolC and LolE).

It is found in the cell inner membrane. Functionally, part of the ABC transporter complex LolCDE involved in the translocation of mature outer membrane-directed lipoproteins, from the inner membrane to the periplasmic chaperone, LolA. Responsible for the formation of the LolA-lipoprotein complex in an ATP-dependent manner. The protein is Lipoprotein-releasing system ATP-binding protein LolD of Mannheimia succiniciproducens (strain KCTC 0769BP / MBEL55E).